The sequence spans 285 residues: Octanoyltransferase (285 aa).

One can recognise a BPL/LPL catalytic domain in the interval L50–I277. Substrate contacts are provided by residues R89–H96, S189–G191, and G202–A204. Catalysis depends on C220, which acts as the Acyl-thioester intermediate.

It belongs to the LipB family.

The protein localises to the cytoplasm. The catalysed reaction is octanoyl-[ACP] + L-lysyl-[protein] = N(6)-octanoyl-L-lysyl-[protein] + holo-[ACP] + H(+). The protein operates within protein modification; protein lipoylation via endogenous pathway; protein N(6)-(lipoyl)lysine from octanoyl-[acyl-carrier-protein]: step 1/2. Functionally, catalyzes the transfer of endogenously produced octanoic acid from octanoyl-acyl-carrier-protein onto the lipoyl domains of lipoate-dependent enzymes. Lipoyl-ACP can also act as a substrate although octanoyl-ACP is likely to be the physiological substrate. This chain is Octanoyltransferase, found in Psychrobacter cryohalolentis (strain ATCC BAA-1226 / DSM 17306 / VKM B-2378 / K5).